The primary structure comprises 420 residues: LanC-like protein 3 homolog (420 aa).

It belongs to the LanC-like protein family.

This chain is LanC-like protein 3 homolog, found in Drosophila pseudoobscura pseudoobscura (Fruit fly).